The following is a 275-amino-acid chain: Large ribosomal subunit protein uL2 (275 aa).

Residues A208–K275 form a disordered region. Composition is skewed to basic residues over residues G209 to T219 and K254 to R263.

It belongs to the universal ribosomal protein uL2 family. As to quaternary structure, part of the 50S ribosomal subunit. Forms a bridge to the 30S subunit in the 70S ribosome.

Functionally, one of the primary rRNA binding proteins. Required for association of the 30S and 50S subunits to form the 70S ribosome, for tRNA binding and peptide bond formation. It has been suggested to have peptidyltransferase activity; this is somewhat controversial. Makes several contacts with the 16S rRNA in the 70S ribosome. This Coxiella burnetii (strain CbuK_Q154) (Coxiella burnetii (strain Q154)) protein is Large ribosomal subunit protein uL2.